The primary structure comprises 1123 residues: Eukaryotic translation initiation factor 2-alpha kinase PK4 (1123 aa).

A disordered region spans residues 1 to 30; it reads MKKRIRSSYKVGSSNKYHKKNYTDNEKDKK. Over residues 21–30 the composition is skewed to basic and acidic residues; that stretch reads NYTDNEKDKK. ATP-binding positions include 245–253 and lysine 270; that span reads IGQGGFGSV. Disordered regions lie at residues 409-493, 572-609, and 742-800; these read FYSD…NDEG, RNEDDKNGLDGDKNGLDGDKNGLDGDKNGLDGDKNELD, and ENDD…DDDI. Residues 419–428 show a composition bias toward basic and acidic residues; the sequence is KNKENPEKNH. Basic residues predominate over residues 455 to 477; sequence HKLKKRKNKKKKSKKKRKSKSKI. A run of 5 repeats spans residues 576–582, 583–589, 590–596, 597–603, and 604–610. Residues 576–610 form a 5 X 7 AA tandem repeat of D-K-N-[GE]-L-D-[GD] region; the sequence is DKNGLDGDKNGLDGDKNGLDGDKNGLDGDKNELDD. Residues 678–1049 enclose the Protein kinase domain; that stretch reads TNVESINTNG…KIKVLLDPHL (372 aa). Residues 743–754 are compositionally biased toward acidic residues; that stretch reads NDDDDDDDDDDN. The Proton acceptor role is filled by aspartate 886. Threonine 953 carries the phosphothreonine modification.

Belongs to the protein kinase superfamily. Ser/Thr protein kinase family. GCN2 subfamily. As to quaternary structure, may form oligomers in response to stress; oligomerization may result in catalytic activity. Interacts with BIP; the interaction is disrupted in response to stress. Auto-phosphorylated.

Its subcellular location is the endoplasmic reticulum membrane. It catalyses the reaction L-seryl-[protein] + ATP = O-phospho-L-seryl-[protein] + ADP + H(+). The enzyme catalyses L-threonyl-[protein] + ATP = O-phospho-L-threonyl-[protein] + ADP + H(+). Its activity is regulated as follows. Dissociation from BIP and oligomerization, may results autophosphorylation and kinase activity induction. During the asexual blood stage, phosphorylates translation factor eIF2alpha in late schizonts resulting in protein translation inhibition. Plays a role in trophozoite differentiation into schizonts. The sequence is that of Eukaryotic translation initiation factor 2-alpha kinase PK4 from Plasmodium falciparum.